Reading from the N-terminus, the 478-residue chain is Crt homolog 3 (478 aa).

The segment at 1–30 (MGSDERKPLLSINDGDDDFNHQDVSTKTPP) is disordered. Topologically, residues 1 to 52 (MGSDERKPLLSINDGDDDFNHQDVSTKTPPIKKESLSNKFKSFLKKSMTKET) are cytoplasmic. A helical transmembrane segment spans residues 53–73 (LPILIYVLLYIISGVINVVLL). Residues 74 to 83 (KKLMIKFVNY) are Vacuolar-facing. A helical membrane pass occupies residues 84–104 (GFFLSQITNYGYLPIFLVAMW). The Cytoplasmic segment spans residues 105-124 (YKMYCTSDVPKETRNFPQYK). A helical membrane pass occupies residues 125-145 (FVIMGLLDAINGFFVVIGGVS). Residues 146 to 149 (TSGP) lie on the Vacuolar side of the membrane. The helical transmembrane segment at 150–170 (LQQLLNQAIIPFTMIASFIFL) threads the bilayer. Over 171–178 (RERYSLFQ) the chain is Cytoplasmic. A helical membrane pass occupies residues 179–199 (LGGAAVILGGVIVSLIPSLVG). Residues 200-205 (GSSGGN) are Vacuolar-facing. A helical transmembrane segment spans residues 206-226 (ILFYNFFYLISVIPGALSNVY). The Cytoplasmic segment spans residues 227-237 (KDIAFQSIDMD). The chain crosses the membrane as a helical span at residues 238–258 (VWYLQFWDCLYQSLFGSILFP). The Vacuolar portion of the chain corresponds to 259–322 (VNNWLPPPAT…FVCDDCHNTW (64 aa)). Residue N296 is glycosylated (N-linked (GlcNAc...) asparagine). Residues 323–343 (IIVLIYMTVNIAYNIFILLVL) form a helical membrane-spanning segment. Residues 344 to 352 (KHAGATVYS) are Cytoplasmic-facing. The helical transmembrane segment at 353 to 373 (IANTVILPLTNIFFSIHFIMG) threads the bilayer. The Vacuolar portion of the chain corresponds to 374-376 (AAT). A helical transmembrane segment spans residues 377–397 (TPFSALSVAGLLLILFGLGGY). Residues 398-478 (RIGSMIKKPP…RYRATNIINN (81 aa)) are Cytoplasmic-facing. The tract at residues 404–446 (KKPPPDSKKDSEQQGGEGGAGDGDSSDNKNNLGDSAEIPQQIQ) is disordered. Residues 406-415 (PPPDSKKDSE) are compositionally biased toward basic and acidic residues.

This sequence belongs to the CRT-like transporter family.

It localises to the vacuole membrane. Its function is as follows. Nutrient transporter. Involved in maintaining the osmotic homeostasis of the digestive vacuole. The polypeptide is Crt homolog 3 (crtp3) (Dictyostelium discoideum (Social amoeba)).